A 321-amino-acid chain; its full sequence is Protein translocase subunit SecF (321 aa).

Transmembrane regions (helical) follow at residues 23 to 43 (VWLI…FSWT), 158 to 178 (LQTT…YISI), 189 to 209 (LLAL…LGII), 217 to 237 (LFAV…VVVF), 258 to 280 (FAVS…PLIA), and 290 to 312 (YWFA…ALVP).

The protein belongs to the SecD/SecF family. SecF subfamily. As to quaternary structure, forms a complex with SecD. Part of the essential Sec protein translocation apparatus which comprises SecA, SecYEG and auxiliary proteins SecDF. Other proteins may also be involved.

Its subcellular location is the cell inner membrane. Part of the Sec protein translocase complex. Interacts with the SecYEG preprotein conducting channel. SecDF uses the proton motive force (PMF) to complete protein translocation after the ATP-dependent function of SecA. Functionally, probably participates in protein translocation into and across both the cytoplasmic and thylakoid membranes in cyanobacterial cells. This Prochlorococcus marinus (strain SARG / CCMP1375 / SS120) protein is Protein translocase subunit SecF.